The primary structure comprises 379 residues: Bifunctional enzyme IspD/IspF (379 aa).

A 2-C-methyl-D-erythritol 4-phosphate cytidylyltransferase region spans residues 1-213 (MSQVSLVVMG…QGFEPPFGGC (213 aa)). Residues 214–379 (YGGSGFDVHA…DWTKHACFNR (166 aa)) form a 2-C-methyl-D-erythritol 2,4-cyclodiphosphate synthase region. Residues Asp-220 and His-222 each coordinate a divalent metal cation. Residues 220–222 (DVH) and 246–247 (HS) contribute to the 4-CDP-2-C-methyl-D-erythritol 2-phosphate site. His-254 provides a ligand contact to a divalent metal cation. Residues 268–270 (DIG), 273–277 (FPDSD), 344–347 (TTTE), Phe-351, and Arg-354 contribute to the 4-CDP-2-C-methyl-D-erythritol 2-phosphate site.

This sequence in the N-terminal section; belongs to the IspD/TarI cytidylyltransferase family. IspD subfamily. The protein in the C-terminal section; belongs to the IspF family. The cofactor is a divalent metal cation.

It carries out the reaction 2-C-methyl-D-erythritol 4-phosphate + CTP + H(+) = 4-CDP-2-C-methyl-D-erythritol + diphosphate. It catalyses the reaction 4-CDP-2-C-methyl-D-erythritol 2-phosphate = 2-C-methyl-D-erythritol 2,4-cyclic diphosphate + CMP. Its pathway is isoprenoid biosynthesis; isopentenyl diphosphate biosynthesis via DXP pathway; isopentenyl diphosphate from 1-deoxy-D-xylulose 5-phosphate: step 2/6. It functions in the pathway isoprenoid biosynthesis; isopentenyl diphosphate biosynthesis via DXP pathway; isopentenyl diphosphate from 1-deoxy-D-xylulose 5-phosphate: step 4/6. Functionally, bifunctional enzyme that catalyzes the formation of 4-diphosphocytidyl-2-C-methyl-D-erythritol from CTP and 2-C-methyl-D-erythritol 4-phosphate (MEP) (IspD), and catalyzes the conversion of 4-diphosphocytidyl-2-C-methyl-D-erythritol 2-phosphate (CDP-ME2P) to 2-C-methyl-D-erythritol 2,4-cyclodiphosphate (ME-CPP) with a corresponding release of cytidine 5-monophosphate (CMP) (IspF). This Wolinella succinogenes (strain ATCC 29543 / DSM 1740 / CCUG 13145 / JCM 31913 / LMG 7466 / NCTC 11488 / FDC 602W) (Vibrio succinogenes) protein is Bifunctional enzyme IspD/IspF.